We begin with the raw amino-acid sequence, 322 residues long: Ribosomal RNA small subunit methyltransferase H (322 aa).

S-adenosyl-L-methionine contacts are provided by residues 47-49 (GGH), Asp-67, Phe-93, Asp-112, and Gln-119.

This sequence belongs to the methyltransferase superfamily. RsmH family.

The protein resides in the cytoplasm. The enzyme catalyses cytidine(1402) in 16S rRNA + S-adenosyl-L-methionine = N(4)-methylcytidine(1402) in 16S rRNA + S-adenosyl-L-homocysteine + H(+). Its function is as follows. Specifically methylates the N4 position of cytidine in position 1402 (C1402) of 16S rRNA. The chain is Ribosomal RNA small subunit methyltransferase H from Stenotrophomonas maltophilia (strain R551-3).